A 155-amino-acid polypeptide reads, in one-letter code: Ribosomal RNA large subunit methyltransferase H (155 aa).

S-adenosyl-L-methionine contacts are provided by residues L72, G104, and 123 to 128 (LSKMTF).

It belongs to the RNA methyltransferase RlmH family. As to quaternary structure, homodimer.

The protein localises to the cytoplasm. The enzyme catalyses pseudouridine(1915) in 23S rRNA + S-adenosyl-L-methionine = N(3)-methylpseudouridine(1915) in 23S rRNA + S-adenosyl-L-homocysteine + H(+). In terms of biological role, specifically methylates the pseudouridine at position 1915 (m3Psi1915) in 23S rRNA. The chain is Ribosomal RNA large subunit methyltransferase H from Cytophaga hutchinsonii (strain ATCC 33406 / DSM 1761 / CIP 103989 / NBRC 15051 / NCIMB 9469 / D465).